A 254-amino-acid chain; its full sequence is 3-deoxy-manno-octulosonate cytidylyltransferase (254 aa).

It belongs to the KdsB family.

It localises to the cytoplasm. It carries out the reaction 3-deoxy-alpha-D-manno-oct-2-ulosonate + CTP = CMP-3-deoxy-beta-D-manno-octulosonate + diphosphate. Its pathway is nucleotide-sugar biosynthesis; CMP-3-deoxy-D-manno-octulosonate biosynthesis; CMP-3-deoxy-D-manno-octulosonate from 3-deoxy-D-manno-octulosonate and CTP: step 1/1. The protein operates within bacterial outer membrane biogenesis; lipopolysaccharide biosynthesis. Functionally, activates KDO (a required 8-carbon sugar) for incorporation into bacterial lipopolysaccharide in Gram-negative bacteria. In Chlamydia trachomatis serovar A (strain ATCC VR-571B / DSM 19440 / HAR-13), this protein is 3-deoxy-manno-octulosonate cytidylyltransferase.